Consider the following 605-residue polypeptide: MSSTYSSIQRHRKDTSSSGSNTTPLARRRRFDEGPADPGSAPHLDSFVVPPTRHDDGTKRQPGRRKQRWSHGENKVADLLQMPTALTGHLTPEQAEAYAIYYRIEEISQQLRLGDIVPPEDERSPSPPPQYDSMGKRTNTRDARYTRQLEEERHRLIERAQRLIPNYRPPVDYHKPAKTQEVVYIPVNEYPDINFIGQLLGARGKTLKKMEQESGAKICIRGRGSVKQGKGRTDIPFQSTAEDDLHCLIISEDEEKIARAVQLVQQVIDTAASVPEGQNELKRSQLRELAALNGTLRDDENYGGAPQSSSGDEMDDRNKRRNNFMSSIVCHICGSKGHFARDCLEKGTNAGTSENADREYDALMRELQGEGVIDTASQQQSIAQNPNTNNVSKLPPAVTGSNAAPINMRKPMSERGGSFDRFDRGGFNQSNQREPQQQSHQQNMHNTNGNNYDRYDRNFNNSSNSSPELPPWHRPTPPSQPAAPPWLRRDNYKKHDKVSVQQSMQQSPWNRDTRQHQHQHQPPVHHQSMFNNNQSPIGPPGMSSSGFGGYGGAPAGVPGMSVPPGPPGLSKVPPPPPPPGVPGMDGDQPIRHPPPPPPGVIGPPK.

Disordered stretches follow at residues 1–75 (MSST…GENK) and 117–139 (VPPEDERSPSPPPQYDSMGKRTN). The 81-residue stretch at 184–264 (YIPVNEYPDI…EKIARAVQLV (81 aa)) folds into the KH domain. The tract at residues 294–319 (GTLRDDENYGGAPQSSSGDEMDDRNK) is disordered. The CCHC-type zinc-finger motif lies at 328–345 (IVCHICGSKGHFARDCLE). Positions 376-392 (ASQQQSIAQNPNTNNVS) are enriched in polar residues. The interval 376-605 (ASQQQSIAQN…PPPGVIGPPK (230 aa)) is disordered. The segment covering 411–424 (PMSERGGSFDRFDR) has biased composition (basic and acidic residues). A compositionally biased stretch (polar residues) spans 428–445 (NQSNQREPQQQSHQQNMH). Positions 446–466 (NTNGNNYDRYDRNFNNSSNSS) are enriched in low complexity. A compositionally biased stretch (pro residues) spans 468 to 484 (ELPPWHRPTPPSQPAAP). Residues 499–510 (SVQQSMQQSPWN) are compositionally biased toward polar residues. Pro residues-rich tracts occupy residues 561 to 581 (SVPPGPPGLSKVPPPPPPPGV) and 591 to 605 (RHPPPPPPGVIGPPK).

Belongs to the BBP/SF1 family.

It localises to the nucleus. Its function is as follows. Necessary for the splicing of pre-mRNA. Has a role in the recognition of the branch site (5'-UACUAAC-3'), the pyrimidine tract and the 3'-splice site at the 3'-end of introns. The protein is Branchpoint-bridging protein (BBP) of Yarrowia lipolytica (strain CLIB 122 / E 150) (Yeast).